Reading from the N-terminus, the 321-residue chain is Probable pectate lyase A (321 aa).

A signal peptide spans 1 to 18; that stretch reads MKFVATLIACGLSGLALA. Asparagine 93 is a glycosylation site (N-linked (GlcNAc...) asparagine). Aspartate 134, aspartate 163, and aspartate 167 together coordinate Ca(2+). Arginine 220 is an active-site residue. Residue asparagine 238 is glycosylated (N-linked (GlcNAc...) asparagine).

This sequence belongs to the polysaccharide lyase 1 family. Requires Ca(2+) as cofactor.

It is found in the secreted. The catalysed reaction is Eliminative cleavage of (1-&gt;4)-alpha-D-galacturonan to give oligosaccharides with 4-deoxy-alpha-D-galact-4-enuronosyl groups at their non-reducing ends.. Pectinolytic enzyme consist of four classes of enzymes: pectin lyase, polygalacturonase, pectin methylesterase and rhamnogalacturonase. Among pectinolytic enzymes, pectin lyase is the most important in depolymerization of pectin, since it cleaves internal glycosidic bonds of highly methylated pectins. Favors pectate, the anion, over pectin, the methyl ester. The chain is Probable pectate lyase A (plyA) from Neosartorya fischeri (strain ATCC 1020 / DSM 3700 / CBS 544.65 / FGSC A1164 / JCM 1740 / NRRL 181 / WB 181) (Aspergillus fischerianus).